Consider the following 214-residue polypeptide: Osteoclast-stimulating factor 1 (214 aa).

Residues 12-71 (GQVKVFRALYTFEPRTPDELYFEEGDILYIADMSDTNWWKGTCKGKTGLIPSNYVAEQAE) form the SH3 domain. 3 ANK repeats span residues 72–101 (SIDN…GVNG), 105–135 (AGST…ELNQ), and 139–168 (LGDT…RTDL).

The protein resides in the cytoplasm. Functionally, induces bone resorption, acting probably through a signaling cascade which results in the secretion of factor(s) enhancing osteoclast formation and activity. The protein is Osteoclast-stimulating factor 1 (ostf1) of Xenopus laevis (African clawed frog).